Consider the following 132-residue polypeptide: Small ribosomal subunit protein uS8 (132 aa).

Belongs to the universal ribosomal protein uS8 family. In terms of assembly, part of the 30S ribosomal subunit. Contacts proteins S5 and S12.

Its function is as follows. One of the primary rRNA binding proteins, it binds directly to 16S rRNA central domain where it helps coordinate assembly of the platform of the 30S subunit. In Staphylococcus epidermidis (strain ATCC 35984 / DSM 28319 / BCRC 17069 / CCUG 31568 / BM 3577 / RP62A), this protein is Small ribosomal subunit protein uS8.